A 268-amino-acid chain; its full sequence is MGLVVVGAGGRMGQTLIRTIQSIEGAKLVGAIERSGSPFLGKDAGEVTGIGTLGVAITDDPLPVFAKAHGVLDFTSPAASVEFAGLAAQARIVHVIGTTGCSAEDDEKIRAAARHATIVKSGNMSLGVNLLSVLVQKAAEALGPEDFDIEILEMHHRHKVDAPSGTALLLGEAAARGRDIALADNSVRVRDGYTGPRETGTIGFATLRGGSVIGDHSVILADTGERVVLSHHAEDRSIFARGAIKAALWAHGKKPGLYSMLDVLGLNT.

Residues 7–12 (GAGGRM) and E33 each bind NAD(+). R34 is a binding site for NADP(+). NAD(+)-binding positions include 97–99 (GTT) and 121–124 (SGNM). H155 functions as the Proton donor/acceptor in the catalytic mechanism. Residue H156 coordinates (S)-2,3,4,5-tetrahydrodipicolinate. The active-site Proton donor is the K159. (S)-2,3,4,5-tetrahydrodipicolinate is bound at residue 165 to 166 (GT).

It belongs to the DapB family.

The protein localises to the cytoplasm. The catalysed reaction is (S)-2,3,4,5-tetrahydrodipicolinate + NAD(+) + H2O = (2S,4S)-4-hydroxy-2,3,4,5-tetrahydrodipicolinate + NADH + H(+). It catalyses the reaction (S)-2,3,4,5-tetrahydrodipicolinate + NADP(+) + H2O = (2S,4S)-4-hydroxy-2,3,4,5-tetrahydrodipicolinate + NADPH + H(+). It participates in amino-acid biosynthesis; L-lysine biosynthesis via DAP pathway; (S)-tetrahydrodipicolinate from L-aspartate: step 4/4. In terms of biological role, catalyzes the conversion of 4-hydroxy-tetrahydrodipicolinate (HTPA) to tetrahydrodipicolinate. This is 4-hydroxy-tetrahydrodipicolinate reductase from Brucella melitensis biotype 1 (strain ATCC 23456 / CCUG 17765 / NCTC 10094 / 16M).